Consider the following 336-residue polypeptide: Lipoyl synthase (336 aa).

[4Fe-4S] cluster contacts are provided by C81, C86, C92, C107, C111, C114, and S323. The region spanning 93–312 (FGHGTATFMI…EDYGYELGFS (220 aa)) is the Radical SAM core domain.

Belongs to the radical SAM superfamily. Lipoyl synthase family. [4Fe-4S] cluster serves as cofactor.

It localises to the cytoplasm. It catalyses the reaction [[Fe-S] cluster scaffold protein carrying a second [4Fe-4S](2+) cluster] + N(6)-octanoyl-L-lysyl-[protein] + 2 oxidized [2Fe-2S]-[ferredoxin] + 2 S-adenosyl-L-methionine + 4 H(+) = [[Fe-S] cluster scaffold protein] + N(6)-[(R)-dihydrolipoyl]-L-lysyl-[protein] + 4 Fe(3+) + 2 hydrogen sulfide + 2 5'-deoxyadenosine + 2 L-methionine + 2 reduced [2Fe-2S]-[ferredoxin]. It participates in protein modification; protein lipoylation via endogenous pathway; protein N(6)-(lipoyl)lysine from octanoyl-[acyl-carrier-protein]: step 2/2. Catalyzes the radical-mediated insertion of two sulfur atoms into the C-6 and C-8 positions of the octanoyl moiety bound to the lipoyl domains of lipoate-dependent enzymes, thereby converting the octanoylated domains into lipoylated derivatives. This Stenotrophomonas maltophilia (strain R551-3) protein is Lipoyl synthase.